Reading from the N-terminus, the 1117-residue chain is Guanylate cyclase D (1117 aa).

Residues Met-1–Ala-66 form the signal peptide. At Arg-67–Ser-479 the chain is on the extracellular side. An intrachain disulfide couples Cys-121 to Cys-149. The helical transmembrane segment at Leu-480–Ile-500 threads the bilayer. At Arg-501–Pro-1117 the chain is on the cytoplasmic side. The segment at Thr-529 to Gln-557 is disordered. A Protein kinase domain is found at Ser-541–Phe-812. An interaction with NCALD region spans residues Met-874–Leu-915. The 131-residue stretch at Thr-887–Glu-1017 folds into the Guanylate cyclase domain. The interval Gly-1096 to Pro-1117 is disordered.

Belongs to the adenylyl cyclase class-4/guanylyl cyclase family. In terms of assembly, interacts (via the catalytic domain) with NCALD. In terms of tissue distribution, found in a subset of olfactory neurons in the main olfactory epithelium.

It is found in the cell projection. Its subcellular location is the cilium membrane. It catalyses the reaction GTP = 3',5'-cyclic GMP + diphosphate. With respect to regulation, activated by Ca(2+). Functions as an olfactory receptor activated by urine odorants, uroguanylin and guanylin and as well by the volatile semiochemicals carbon disulfide (CS2) and carbon dioxide (CO2). Has guanylate cyclase activity upon binding of the ligand. Activation of GUCY2D neurons leads to the cGMP-dependent activation of the CNGA3 channels, membrane depolarization and an increase in action potential frequency. Signaling pathways activated by GUCY2D may trigger social behaviors such as acquisition of food preference. In Mus musculus (Mouse), this protein is Guanylate cyclase D.